Consider the following 398-residue polypeptide: GPI mannosyltransferase 1 (398 aa).

The next 9 helical transmembrane spans lie at 4 to 24 (LKYL…FGLY), 79 to 99 (WYHF…LIIL), 114 to 136 (MILS…GSAE), 156 to 176 (VILS…PIIY), 209 to 229 (IIIT…KYGW), 271 to 291 (IEKI…PLIF), 305 to 325 (FVFV…FLIF), 341 to 361 (ITGI…LYFA), and 375 to 395 (GLMY…MKFI).

Belongs to the PIGM family.

It is found in the endoplasmic reticulum membrane. Its pathway is glycolipid biosynthesis; glycosylphosphatidylinositol-anchor biosynthesis. Mannosyltransferase involved in glycosylphosphatidylinositol-anchor biosynthesis. Transfers the first alpha-1,4-mannose to GlcN-acyl-PI during GPI precursor assembly. Required for cell wall integrity. The chain is GPI mannosyltransferase 1 (GPI14) from Candida albicans (strain SC5314 / ATCC MYA-2876) (Yeast).